Consider the following 554-residue polypeptide: DM7 family protein GG17593 (554 aa).

Belongs to the DM7 family.

This chain is DM7 family protein GG17593, found in Drosophila erecta (Fruit fly).